Reading from the N-terminus, the 381-residue chain is Chaperone protein DnaJ (381 aa).

The J domain maps to D5–G69. Residues G136–R218 form a CR-type zinc finger. 8 residues coordinate Zn(2+): C149, C152, C166, C169, C192, C195, C206, and C209. 4 CXXCXGXG motif repeats span residues C149–G156, C166–G173, C192–G199, and C206–G213. Residues G154–Q174 form a disordered region.

Belongs to the DnaJ family. In terms of assembly, homodimer. Requires Zn(2+) as cofactor.

The protein resides in the cytoplasm. Its function is as follows. Participates actively in the response to hyperosmotic and heat shock by preventing the aggregation of stress-denatured proteins and by disaggregating proteins, also in an autonomous, DnaK-independent fashion. Unfolded proteins bind initially to DnaJ; upon interaction with the DnaJ-bound protein, DnaK hydrolyzes its bound ATP, resulting in the formation of a stable complex. GrpE releases ADP from DnaK; ATP binding to DnaK triggers the release of the substrate protein, thus completing the reaction cycle. Several rounds of ATP-dependent interactions between DnaJ, DnaK and GrpE are required for fully efficient folding. Also involved, together with DnaK and GrpE, in the DNA replication of plasmids through activation of initiation proteins. This is Chaperone protein DnaJ from Geobacillus thermodenitrificans (strain NG80-2).